Here is a 378-residue protein sequence, read N- to C-terminus: Probable mannosyltransferase MNT3 (378 aa).

Topologically, residues 1–4 (MLWH) are cytoplasmic. The helical; Signal-anchor for type II membrane protein transmembrane segment at 5-25 (LVFILIAILLLTFSPKIESLF) threads the bilayer. The Lumenal portion of the chain corresponds to 26 to 378 (KSFTINKPTK…TNHFLNILHN (353 aa)). Asn-73 and Asn-149 each carry an N-linked (GlcNAc...) asparagine glycan.

The protein belongs to the glycosyltransferase 15 family.

The protein resides in the membrane. Functionally, transfers an alpha-D-mannosyl residue from GDP-mannose into lipid-linked oligosaccharide, forming an alpha-(1-&gt;2)-D-mannosyl-D-mannose linkage. The protein is Probable mannosyltransferase MNT3 (MNT3) of Candida albicans (strain SC5314 / ATCC MYA-2876) (Yeast).